The chain runs to 304 residues: uncharacterized protein (304 aa).

Residue 72–79 (GPTGSGKT) coordinates ATP.

This sequence belongs to the CbbQ/NirQ/NorQ/GpvN family.

This is an uncharacterized protein from Bacillus subtilis (strain 168).